The sequence spans 383 residues: Probable purine permease 16 (383 aa).

10 helical membrane-spanning segments follow: residues 30–50, 72–92, 113–133, 138–158, 166–186, 203–223, 247–267, 297–317, 322–342, and 346–363; these read ISVF…MLLL, WTQA…FFIL, VLSL…LYAL, VGWG…SAFI, WIII…PAFA, LILI…QLGF, ICVS…SGEF, VWAV…ADVV, SPVV…EFGW, and GALL…YSLH.

This sequence belongs to the purine permeases (TC 2.A.7.14) family.

It is found in the membrane. This chain is Probable purine permease 16 (PUP16), found in Arabidopsis thaliana (Mouse-ear cress).